The chain runs to 373 residues: D-amino-acid oxidase 3 (373 aa).

The first 19 residues, 1–19 (MVKYDAVILGSGVLGLSIA), serve as a signal peptide directing secretion. 7 residues coordinate FAD: S11, L14, D35, A46, S47, G51, and N53. F57 lines the anthranilate pocket. N-linked (GlcNAc...) asparagine glycosylation is present at N180. The cysteines at positions 214 and 271 are disulfide-linked. Anthranilate contacts are provided by Y229, Y246, and R296. (R)-lactate is bound by residues Y229, Y246, and R296. Residues R296, G342, G345, Y346, and Q347 each coordinate FAD. The short motif at 371-373 (AKL) is the Microbody targeting signal element.

The protein belongs to the DAMOX/DASOX family. FAD is required as a cofactor.

It is found in the peroxisome matrix. It catalyses the reaction a D-alpha-amino acid + O2 + H2O = a 2-oxocarboxylate + H2O2 + NH4(+). Its function is as follows. Catalyzes the oxidative deamination of D-amino acids with broad substrate specificity. Enables the organism to utilize D-amino acids as a source of nutrients. Enables the organism to utilize D-glutamate and D-methionine as a nitrogen source. Protects the organism from the toxicity of D-amino acids, including from D-glutamate. May play a role in its interaction with the host. This chain is D-amino-acid oxidase 3, found in Cryptococcus neoformans var. grubii serotype A (strain H99 / ATCC 208821 / CBS 10515 / FGSC 9487) (Filobasidiella neoformans var. grubii).